A 126-amino-acid chain; its full sequence is Fatty acid-binding protein, liver (126 aa).

N-acetylalanine is present on A2.

It belongs to the calycin superfamily. Fatty-acid binding protein (FABP) family.

It is found in the cytoplasm. In terms of biological role, binds free fatty acids and their coenzyme A derivatives, bilirubin, and some other small molecules in the cytoplasm. May be involved in intracellular lipid transport. This is Fatty acid-binding protein, liver (fabp1) from Schroederichthys bivius (Narrowmouthed catshark).